A 116-amino-acid polypeptide reads, in one-letter code: Transmembrane protein 213 (116 aa).

Residues 1–35 form the signal peptide; that stretch reads MAQSGVFLRNPGHLTSAPQAALLFSLVLTSFHLSC. At 36 to 79 the chain is on the extracellular side; the sequence is GTETSSSNSTLSAHHPDPGTLEQCANVDFCPLASLCCRASVDEY. Residues 80–100 form a helical membrane-spanning segment; it reads GWIAAAVGWSFWFLTLILLCV. Residues 101–116 lie on the Cytoplasmic side of the membrane; sequence DKLMKLTPEEPKDLAA.

The protein resides in the membrane. The chain is Transmembrane protein 213 (Tmem213) from Mus musculus (Mouse).